The following is a 418-amino-acid chain: Deubiquitinase and deneddylase Dub1 (418 aa).

The span at 1-10 (MLSPTNSTSK) shows a compositional bias: polar residues. A disordered region spans residues 1 to 23 (MLSPTNSTSKKAPVPPQDSSKPV). The helical transmembrane segment at 40–60 (TALAVLLVVVTLGLILLFYSF) threads the bilayer. Residues 72-143 (TRPSTKEQPT…PPLPPKAPKP (72 aa)) are disordered. A compositionally biased stretch (pro residues) spans 86–141 (VPLPSPPLAVPRPSTPPPPVISRPSTPPAPTPAISPPSTPSAPKPSTPPPLPPKAP). Catalysis depends on residues histidine 288, aspartate 305, and cysteine 358.

This sequence belongs to the peptidase C48 family.

The protein resides in the secreted. It localises to the host cell. The protein localises to the membrane. Its function is as follows. Effector proteins function to alter host cell physiology and promote bacterial survival in host tissues. This protease possesses deubiquitinating and deneddylating activities. This is Deubiquitinase and deneddylase Dub1 (cdu1) from Chlamydia trachomatis serovar D (strain ATCC VR-885 / DSM 19411 / UW-3/Cx).